The following is a 170-amino-acid chain: RNA polymerase sigma factor TcsR (170 aa).

The sigma-70 factor domain-4 stretch occupies residues 122–169 (IKDLTQNEKNILRKIYLHGLRESEISRELNISRQAVNKTHLRALEKLK). A DNA-binding region (H-T-H motif) is located at residues 143–162 (ESEISRELNISRQAVNKTHL).

This sequence belongs to the sigma-70 factor family.

Its function is as follows. Sigma factors are initiation factors that promote the attachment of RNA polymerase to specific initiation sites and are then released. Transcriptional regulator specifically required to activate expression of the toxin gene locus, composed of tcsL and tcdE/utxA. The sequence is that of RNA polymerase sigma factor TcsR from Paraclostridium sordellii (strain ATCC 9714 / DSM 2141 / JCM 3814 / LMG 15708 / NCIMB 10717 / 211) (Clostridium sordellii).